Reading from the N-terminus, the 226-residue chain is RPA-interacting protein A (226 aa).

The tract at residues 1–45 (MEAERRHRALYKGTTPPWKETYRKRCVERLKRNRSKLLDKFRQVG) is interaction with importin beta. Residues 49 to 171 (HGGVGGSFLV…QCGVYINTQS (123 aa)) form an interaction with RPA1 region. An RIP-type zinc finger spans residues 144-219 (CPVCNRNYLT…ASLFMSCQEC (76 aa)).

Interacts directly with the rpa1 subunit of RPA complex. Interacts with importin beta, but not with importin alpha. Forms a complex with the RPA complex and importin beta, which is dissociated by Ran-GTP.

It is found in the nucleus. Its function is as follows. Mediates the import of RPA complex into the nucleus, via its interaction with importin beta. This is RPA-interacting protein A (rpain-a) from Xenopus laevis (African clawed frog).